A 263-amino-acid chain; its full sequence is 2-dehydro-3-deoxyphosphooctonate aldolase (263 aa).

This sequence belongs to the KdsA family.

It localises to the cytoplasm. It carries out the reaction D-arabinose 5-phosphate + phosphoenolpyruvate + H2O = 3-deoxy-alpha-D-manno-2-octulosonate-8-phosphate + phosphate. The protein operates within carbohydrate biosynthesis; 3-deoxy-D-manno-octulosonate biosynthesis; 3-deoxy-D-manno-octulosonate from D-ribulose 5-phosphate: step 2/3. Its pathway is bacterial outer membrane biogenesis; lipopolysaccharide biosynthesis. This chain is 2-dehydro-3-deoxyphosphooctonate aldolase, found in Wolinella succinogenes (strain ATCC 29543 / DSM 1740 / CCUG 13145 / JCM 31913 / LMG 7466 / NCTC 11488 / FDC 602W) (Vibrio succinogenes).